A 408-amino-acid polypeptide reads, in one-letter code: Na(+)-translocating NADH-quinone reductase subunit F (408 aa).

Residues 4–24 form a helical membrane-spanning segment; that stretch reads IYLGVGMFIAIVLALVLIIMF. In terms of domain architecture, 2Fe-2S ferredoxin-type spans 33–127; sequence GEVTISINGD…DMDIELPEEI (95 aa). 4 residues coordinate [2Fe-2S] cluster: Cys-70, Cys-76, Cys-79, and Cys-111. Positions 130 to 270 constitute an FAD-binding FR-type domain; it reads IKKWDCEVIS…SGPFGEFFAK (141 aa).

It belongs to the NqrF family. In terms of assembly, composed of six subunits; NqrA, NqrB, NqrC, NqrD, NqrE and NqrF. The cofactor is [2Fe-2S] cluster. FAD is required as a cofactor.

Its subcellular location is the cell inner membrane. The enzyme catalyses a ubiquinone + n Na(+)(in) + NADH + H(+) = a ubiquinol + n Na(+)(out) + NAD(+). Functionally, NQR complex catalyzes the reduction of ubiquinone-1 to ubiquinol by two successive reactions, coupled with the transport of Na(+) ions from the cytoplasm to the periplasm. The first step is catalyzed by NqrF, which accepts electrons from NADH and reduces ubiquinone-1 to ubisemiquinone by a one-electron transfer pathway. This Pseudoalteromonas atlantica (strain T6c / ATCC BAA-1087) protein is Na(+)-translocating NADH-quinone reductase subunit F.